The sequence spans 275 residues: Ribosomal RNA small subunit methyltransferase A (275 aa).

6 residues coordinate S-adenosyl-L-methionine: asparagine 19, leucine 21, glycine 46, glutamate 71, aspartate 94, and asparagine 117.

Belongs to the class I-like SAM-binding methyltransferase superfamily. rRNA adenine N(6)-methyltransferase family. RsmA subfamily.

The protein localises to the cytoplasm. It catalyses the reaction adenosine(1518)/adenosine(1519) in 16S rRNA + 4 S-adenosyl-L-methionine = N(6)-dimethyladenosine(1518)/N(6)-dimethyladenosine(1519) in 16S rRNA + 4 S-adenosyl-L-homocysteine + 4 H(+). Its function is as follows. Specifically dimethylates two adjacent adenosines (A1518 and A1519) in the loop of a conserved hairpin near the 3'-end of 16S rRNA in the 30S particle. May play a critical role in biogenesis of 30S subunits. This chain is Ribosomal RNA small subunit methyltransferase A, found in Burkholderia orbicola (strain MC0-3).